Here is a 396-residue protein sequence, read N- to C-terminus: Phosphoglycerate kinase (396 aa).

Substrate is bound by residues 21-23 (DFN), Arg36, 59-62 (HLGR), Arg118, and Arg151. ATP contacts are provided by residues Lys201, Gly292, Glu323, and 349-352 (GGDS).

Belongs to the phosphoglycerate kinase family. As to quaternary structure, monomer.

It localises to the cytoplasm. It carries out the reaction (2R)-3-phosphoglycerate + ATP = (2R)-3-phospho-glyceroyl phosphate + ADP. The protein operates within carbohydrate degradation; glycolysis; pyruvate from D-glyceraldehyde 3-phosphate: step 2/5. In Leptospira borgpetersenii serovar Hardjo-bovis (strain L550), this protein is Phosphoglycerate kinase.